We begin with the raw amino-acid sequence, 311 residues long: Insulin-like growth factor-binding protein 2 (311 aa).

Residues 1–36 (MALGGVGRGGAARAAWPRLLLAALAPALALAGPALP) form the signal peptide. One can recognise an IGFBP N-terminal domain in the interval 38–120 (VLFRCPPCTA…VQGQGTCARP (83 aa)). 6 disulfides stabilise this stretch: Cys-42/Cys-70, Cys-45/Cys-72, Cys-53/Cys-73, Cys-61/Cys-76, Cys-84/Cys-97, and Cys-91/Cys-117. Disordered regions lie at residues 112-168 (QGQG…PLKT) and 188-210 (GKVGKAHHNHEDSKKSRMPTGRT). The Thyroglobulin type-1 domain maps to 209–291 (RTPCQQELDQ…APTIRGDPEC (83 aa)). 3 disulfide bridges follow: Cys-212-Cys-246, Cys-257-Cys-268, and Cys-270-Cys-291. The short motif at 286-288 (RGD) is the Cell attachment site element.

Binds IGF2 more than IGF1.

Its subcellular location is the secreted. In terms of biological role, inhibits IGF-mediated growth and developmental rates. IGF-binding proteins prolong the half-life of the IGFs and have been shown to either inhibit or stimulate the growth promoting effects of the IGFs on cell culture. They alter the interaction of IGFs with their cell surface receptors. This chain is Insulin-like growth factor-binding protein 2 (IGFBP2), found in Gallus gallus (Chicken).